A 1240-amino-acid polypeptide reads, in one-letter code: ABC transporter B family member 17 (1240 aa).

The 290-residue stretch at 35–324 folds into the ABC transmembrane type-1 1 domain; sequence MALGLIGAVG…SLSNLKYFSE (290 aa). A helical membrane pass occupies residues 36–56; it reads ALGLIGAVGDGFITPVVVFIF. N70 carries N-linked (GlcNAc...) asparagine glycosylation. The next 5 helical transmembrane spans lie at 81 to 101, 158 to 180, 184 to 206, 264 to 284, and 296 to 316; these read VVALLYVACGSWVICFLEGYC, LPNFLMNASAFVASYIVSFILMW, IVGFPFIILLLVPGLMYGRALVS, GITIGSNGVTHAIWAFLTWYG, and GTVFVVISCITYGGVSLGQSL. The ABC transporter 1 domain maps to 359–595; the sequence is VEFNHVKFTY…IDGQYTSLVS (237 aa). ATP is bound at residue 394 to 401; it reads GGSGSGKS. N-linked (GlcNAc...) asparagine glycans are attached at residues N542, N609, and N642. Residues 672 to 960 form the ABC transmembrane type-1 2 domain; it reads ALYGCLSAAL…AGTMTTDLAR (289 aa). Transmembrane regions (helical) follow at residues 681–701 and 714–734; these read LVGVLQPVSAYSAGSVISVFF and IYVLLFVGLAIFSFLVNISQH. N769 carries an N-linked (GlcNAc...) asparagine glycan. The next 4 helical transmembrane spans lie at 793 to 815, 817 to 839, 896 to 919, and 923 to 943; these read MSLLVQTISAVIIACIIGLVIAW, LAIVMISVQPLIVVCFYTQRVLL, WLAGIVLGTSRSLITCTSALNFWY, and LIADGKIVSKAFFEIFLIFVT. Positions 995–1233 constitute an ABC transporter 2 domain; the sequence is ITFLNVDFAY…GPTGTYFSLA (239 aa). N1015 carries N-linked (GlcNAc...) asparagine glycosylation. Residue 1030-1037 coordinates ATP; sequence GTSGSGKS.

Belongs to the ABC transporter superfamily. ABCB family. Multidrug resistance exporter (TC 3.A.1.201) subfamily.

It is found in the membrane. This Arabidopsis thaliana (Mouse-ear cress) protein is ABC transporter B family member 17 (ABCB17).